We begin with the raw amino-acid sequence, 210 residues long: MSGLFITLEGPEGAGKSTNRDYLAARLREHGLDVVLTREPGGTPLAERVRELLLAPSDESMAADTELLLVFAARAQHLAQVIRPALARGAVVLCDRFTDATYAYQGGGRGLSVERIATLEQFVQGGLRPDLTLVFDLPVEVGLARAAARGRLDRFEQEGQAFFEAVRQAYLQRAQRAPQRYSLLDAAQSLEAVQRDIDALLPGIVERCRG.

10–17 serves as a coordination point for ATP; sequence GPEGAGKS.

It belongs to the thymidylate kinase family.

It carries out the reaction dTMP + ATP = dTDP + ADP. In terms of biological role, phosphorylation of dTMP to form dTDP in both de novo and salvage pathways of dTTP synthesis. In Pseudomonas putida (strain GB-1), this protein is Thymidylate kinase.